The chain runs to 415 residues: UDP-N-acetylglucosamine 1-carboxyvinyltransferase 1 (415 aa).

Position 23–24 (23–24 (KN)) interacts with phosphoenolpyruvate. Arg92 contacts UDP-N-acetyl-alpha-D-glucosamine. Residue Cys116 is the Proton donor of the active site. A 2-(S-cysteinyl)pyruvic acid O-phosphothioketal modification is found at Cys116. UDP-N-acetyl-alpha-D-glucosamine contacts are provided by residues 121 to 125 (RPIDL), Asp304, and Val326.

This sequence belongs to the EPSP synthase family. MurA subfamily.

Its subcellular location is the cytoplasm. The enzyme catalyses phosphoenolpyruvate + UDP-N-acetyl-alpha-D-glucosamine = UDP-N-acetyl-3-O-(1-carboxyvinyl)-alpha-D-glucosamine + phosphate. It participates in cell wall biogenesis; peptidoglycan biosynthesis. In terms of biological role, cell wall formation. Adds enolpyruvyl to UDP-N-acetylglucosamine. This Caldanaerobacter subterraneus subsp. tengcongensis (strain DSM 15242 / JCM 11007 / NBRC 100824 / MB4) (Thermoanaerobacter tengcongensis) protein is UDP-N-acetylglucosamine 1-carboxyvinyltransferase 1.